Here is a 428-residue protein sequence, read N- to C-terminus: Glutamate-1-semialdehyde 2,1-aminomutase (428 aa).

K267 carries the N6-(pyridoxal phosphate)lysine modification.

This sequence belongs to the class-III pyridoxal-phosphate-dependent aminotransferase family. HemL subfamily. In terms of assembly, homodimer. Pyridoxal 5'-phosphate serves as cofactor.

It is found in the cytoplasm. The catalysed reaction is (S)-4-amino-5-oxopentanoate = 5-aminolevulinate. It functions in the pathway porphyrin-containing compound metabolism; protoporphyrin-IX biosynthesis; 5-aminolevulinate from L-glutamyl-tRNA(Glu): step 2/2. It participates in porphyrin-containing compound metabolism; chlorophyll biosynthesis. The polypeptide is Glutamate-1-semialdehyde 2,1-aminomutase (Prochlorococcus marinus (strain NATL1A)).